A 475-amino-acid polypeptide reads, in one-letter code: uncharacterized protein (475 aa).

Residues 19–39 form a helical membrane-spanning segment; the sequence is LVSAILILSILIWLIITIFFA.

It localises to the membrane. This is an uncharacterized protein from Mycoplasma pneumoniae (strain ATCC 29342 / M129 / Subtype 1) (Mycoplasmoides pneumoniae).